A 79-amino-acid polypeptide reads, in one-letter code: Small ribosomal subunit protein bS18 (79 aa).

Belongs to the bacterial ribosomal protein bS18 family. As to quaternary structure, part of the 30S ribosomal subunit. Forms a tight heterodimer with protein bS6.

Its function is as follows. Binds as a heterodimer with protein bS6 to the central domain of the 16S rRNA, where it helps stabilize the platform of the 30S subunit. The protein is Small ribosomal subunit protein bS18 of Bacillus pumilus (strain SAFR-032).